A 336-amino-acid polypeptide reads, in one-letter code: F420-dependent glucose-6-phosphate dehydrogenase (336 aa).

Asp-39 provides a ligand contact to coenzyme F420-(gamma-Glu)n. His-40 serves as the catalytic Proton donor. Coenzyme F420-(gamma-Glu)n-binding positions include Thr-76 and 107 to 108 (SG). The active-site Proton acceptor is the Glu-109. Coenzyme F420-(gamma-Glu)n is bound by residues Asn-112, 177 to 178 (GG), and 180 to 181 (VV). Residues Thr-195, Lys-198, Lys-259, and Arg-283 each contribute to the substrate site.

It belongs to the F420-dependent glucose-6-phosphate dehydrogenase family. As to quaternary structure, homodimer.

It carries out the reaction oxidized coenzyme F420-(gamma-L-Glu)(n) + D-glucose 6-phosphate + H(+) = 6-phospho-D-glucono-1,5-lactone + reduced coenzyme F420-(gamma-L-Glu)(n). In terms of biological role, catalyzes the coenzyme F420-dependent oxidation of glucose 6-phosphate (G6P) to 6-phosphogluconolactone. The polypeptide is F420-dependent glucose-6-phosphate dehydrogenase (Tsukamurella paurometabola (strain ATCC 8368 / DSM 20162 / CCUG 35730 / CIP 100753 / JCM 10117 / KCTC 9821 / NBRC 16120 / NCIMB 702349 / NCTC 13040) (Corynebacterium paurometabolum)).